Here is a 120-residue protein sequence, read N- to C-terminus: ATP-dependent Clp protease adapter protein ClpS (120 aa).

The protein belongs to the ClpS family. Binds to the N-terminal domain of the chaperone ClpA.

Its function is as follows. Involved in the modulation of the specificity of the ClpAP-mediated ATP-dependent protein degradation. This chain is ATP-dependent Clp protease adapter protein ClpS, found in Pseudomonas fluorescens (strain ATCC BAA-477 / NRRL B-23932 / Pf-5).